We begin with the raw amino-acid sequence, 113 residues long: Hydrogenase maturation factor HypA 2 (113 aa).

Histidine 2 is a binding site for Ni(2+). Cysteine 73, cysteine 76, cysteine 89, and cysteine 92 together coordinate Zn(2+).

It belongs to the HypA/HybF family.

Involved in the maturation of [NiFe] hydrogenases. Required for nickel insertion into the metal center of the hydrogenase. The chain is Hydrogenase maturation factor HypA 2 from Bradyrhizobium diazoefficiens (strain JCM 10833 / BCRC 13528 / IAM 13628 / NBRC 14792 / USDA 110).